Here is a 284-residue protein sequence, read N- to C-terminus: UPF0294 protein VV1_1880 (284 aa).

It belongs to the UPF0294 family.

Its subcellular location is the cytoplasm. The protein is UPF0294 protein VV1_1880 of Vibrio vulnificus (strain CMCP6).